The chain runs to 403 residues: MNSILSSVLPAPEDPVLSVIFACRDDPSPVKLNLSAGTYRTEEGKPLVLDVVRRAEQQLANDLDKEYLPLNGLPEFNKLSTKLILGDDSPALKENRVVTTQCLSGTGSLRVGAEFLATHNKESVIFVPNPTWGNHPRIFTLAGLSVQYFRYYDPKSRGLDFKGMLEDLGAAPPGAIVVLQACAHNPTGVDPTFEQWEKIRRLVRSKSLLPFFDSAYQGFASGSLDADAQAVRMFVADGGECLIAQSYAKNMGLYGERIGSLTIVCTSEDVAKKVENQVLLVVRPMYLTPPIHGASIVATILKNSDMYNDWTIELKGMADRIISMRQQLYAALEARGTPGDWSHIIKHIGMFTFTGLSEEQVRLMAKEYHIYMTYDGRISMASLSSKTVPQLADAIHAVVTRIA.

N-acetylmethionine is present on methionine 1. L-aspartate-binding residues include glycine 37, tryptophan 132, and asparagine 185. The residue at position 249 (lysine 249) is an N6-(pyridoxal phosphate)lysine. Position 377 (arginine 377) interacts with L-aspartate.

The protein belongs to the class-I pyridoxal-phosphate-dependent aminotransferase family. As to quaternary structure, homodimer. Pyridoxal 5'-phosphate is required as a cofactor.

It is found in the cytoplasm. It carries out the reaction L-aspartate + 2-oxoglutarate = oxaloacetate + L-glutamate. In terms of biological role, important for the metabolism of amino acids and Krebs-cycle related organic acids. In plants, it is involved in nitrogen metabolism and in aspects of carbon and energy metabolism. This is Aspartate aminotransferase, cytoplasmic isozyme 2 (ASP4) from Arabidopsis thaliana (Mouse-ear cress).